Reading from the N-terminus, the 423-residue chain is Serine--tRNA ligase (423 aa).

Residue 230–232 participates in L-serine binding; the sequence is TAE. An ATP-binding site is contributed by 261–263; the sequence is RAE. Residue E284 participates in L-serine binding. Residue 348–351 coordinates ATP; it reads EISS. An L-serine-binding site is contributed by S384.

Belongs to the class-II aminoacyl-tRNA synthetase family. Type-1 seryl-tRNA synthetase subfamily. In terms of assembly, homodimer. The tRNA molecule binds across the dimer.

The protein localises to the cytoplasm. The enzyme catalyses tRNA(Ser) + L-serine + ATP = L-seryl-tRNA(Ser) + AMP + diphosphate + H(+). It catalyses the reaction tRNA(Sec) + L-serine + ATP = L-seryl-tRNA(Sec) + AMP + diphosphate + H(+). Its pathway is aminoacyl-tRNA biosynthesis; selenocysteinyl-tRNA(Sec) biosynthesis; L-seryl-tRNA(Sec) from L-serine and tRNA(Sec): step 1/1. Its function is as follows. Catalyzes the attachment of serine to tRNA(Ser). Is also able to aminoacylate tRNA(Sec) with serine, to form the misacylated tRNA L-seryl-tRNA(Sec), which will be further converted into selenocysteinyl-tRNA(Sec). This chain is Serine--tRNA ligase, found in Acetivibrio thermocellus (strain ATCC 27405 / DSM 1237 / JCM 9322 / NBRC 103400 / NCIMB 10682 / NRRL B-4536 / VPI 7372) (Clostridium thermocellum).